Reading from the N-terminus, the 228-residue chain is UPF0758 protein CLB_3028 (228 aa).

Positions 106–228 (KISTPLDVSN…YVSMKEKGTI (123 aa)) constitute an MPN domain. His177, His179, and Asp190 together coordinate Zn(2+). The JAMM motif signature appears at 177 to 190 (HNHPSGDPTPSKED).

This sequence belongs to the UPF0758 family.

This Clostridium botulinum (strain ATCC 19397 / Type A) protein is UPF0758 protein CLB_3028.